The primary structure comprises 254 residues: Peptide methionine sulfoxide reductase A5 (254 aa).

The N-terminal stretch at 1–26 is a signal peptide; sequence MARGSAAAAIAGVVWVLLLLVGVASG.

This sequence belongs to the MsrA Met sulfoxide reductase family.

The catalysed reaction is L-methionyl-[protein] + [thioredoxin]-disulfide + H2O = L-methionyl-(S)-S-oxide-[protein] + [thioredoxin]-dithiol. It carries out the reaction [thioredoxin]-disulfide + L-methionine + H2O = L-methionine (S)-S-oxide + [thioredoxin]-dithiol. Its function is as follows. Catalyzes the reduction of methionine sulfoxide (MetSO) to methionine in proteins. Plays a protective role against oxidative stress by restoring activity to proteins that have been inactivated by methionine oxidation. MSRA family specifically reduces the MetSO S-enantiomer. This chain is Peptide methionine sulfoxide reductase A5 (MSRA5), found in Oryza sativa subsp. japonica (Rice).